The primary structure comprises 399 residues: Forkhead box protein Q1 (399 aa).

Positions 1-112 (MKLEVFAPRA…EGARSKPYTR (112 aa)) are disordered. Over residues 32–54 (LSAAGDDSLGSDGDCAANSPAAG) the composition is skewed to low complexity. Residues 55-66 (SGAGDLEGGGGE) are compositionally biased toward gly residues. Residues 114–205 (PKPPYSYIAL…SEYTFADGVF (92 aa)) constitute a DNA-binding region (fork-head). The disordered stretch occupies residues 211 to 263 (RLSHRTTVSASGYGGGSPPGPAGTPQPAPTAGSSPIARSPARQEEGSSPASKF). The span at 228-238 (PPGPAGTPQPA) shows a compositional bias: pro residues.

It is found in the nucleus. Its function is as follows. Plays a role in hair follicle differentiation. The polypeptide is Forkhead box protein Q1 (Foxq1) (Rattus norvegicus (Rat)).